The primary structure comprises 257 residues: Myosin-8 (257 aa).

The stretch at 1-257 (RAALQAEIEE…REVHTKISAE (257 aa)) forms a coiled coil. A phosphoserine mark is found at serine 33, serine 45, and serine 58.

Muscle myosin is a hexameric protein that consists of 2 heavy chain subunits (MHC), 2 alkali light chain subunits (MLC) and 2 regulatory light chain subunits (MLC-2).

It localises to the cytoplasm. The protein localises to the myofibril. Muscle contraction. The sequence is that of Myosin-8 (Myh8) from Rattus norvegicus (Rat).